The chain runs to 367 residues: MDRIIQSPGKYIQGADVINRLGEYLKPLAERWLVVGDKFVLGFAQSTVEKSFKDAGLVVEIAPFGGECSQNEIDRLRGIAETAQCGAILGIGGGKTLDTAKALAHFMGVPVAIAPTIASTDAPCSALSVIYTDEGEFDRYLLLPNNPNMVIVDTKIVAGAPARLLAAGIGDALATWFEARACSRSGATTMAGGKCTQAALALAELCYNTLLEEGEKAMLAAEQHVVTPALERVIEANTYLSGVGFESGGLAAAHAVHNGLTAIPDAHHYYHGEKVAFGTLTQLVLENAPVEEIETVAALSHAVGLPITLAQLDIKEDVPAKMRIVAEAACAEGETIHNMPGGATPDQVYAALLVADQYGQRFLQEWE.

5 residues coordinate NAD(+): aspartate 37, glycine 94, lysine 95, threonine 116, and serine 119. Residue aspartate 121 participates in glycerol binding. Serine 125, leucine 127, and tyrosine 131 together coordinate NAD(+). Zn(2+) is bound by residues aspartate 171, histidine 254, and histidine 271. Residue histidine 254 participates in glycerol binding.

This sequence belongs to the iron-containing alcohol dehydrogenase family. Requires Zn(2+) as cofactor.

The catalysed reaction is glycerol + NAD(+) = dihydroxyacetone + NADH + H(+). It participates in polyol metabolism; glycerol fermentation; glycerone phosphate from glycerol (oxidative route): step 1/2. In terms of biological role, catalyzes the NAD-dependent oxidation of glycerol to dihydroxyacetone (glycerone). Allows microorganisms to utilize glycerol as a source of carbon under anaerobic conditions. In Escherichia coli O6:H1 (strain CFT073 / ATCC 700928 / UPEC), this protein is Glycerol dehydrogenase (gldA).